The chain runs to 163 residues: Lipoprotein signal peptidase (163 aa).

Helical transmembrane passes span 11–31, 63–83, and 88–108; these read ILIA…IATT, KMTF…YFFI, and YNLF…GNFI. Catalysis depends on residues Asp-118 and Asp-136. The helical transmembrane segment at 131–151 threads the bilayer; sequence IFNIADSSLTIGVILIIIALL.

It belongs to the peptidase A8 family.

The protein resides in the cell membrane. It carries out the reaction Release of signal peptides from bacterial membrane prolipoproteins. Hydrolyzes -Xaa-Yaa-Zaa-|-(S,diacylglyceryl)Cys-, in which Xaa is hydrophobic (preferably Leu), and Yaa (Ala or Ser) and Zaa (Gly or Ala) have small, neutral side chains.. It functions in the pathway protein modification; lipoprotein biosynthesis (signal peptide cleavage). Its function is as follows. This protein specifically catalyzes the removal of signal peptides from prolipoproteins. In Staphylococcus aureus, this protein is Lipoprotein signal peptidase.